A 376-amino-acid polypeptide reads, in one-letter code: Chaperone protein DnaJ (376 aa).

Residues Asp5–Gly72 enclose the J domain. The segment at Gly136–Gln214 adopts a CR-type zinc-finger fold. The Zn(2+) site is built by Cys149, Cys152, Cys166, Cys169, Cys188, Cys191, Cys202, and Cys205. CXXCXGXG motif repeat units lie at residues Cys149–Gly156, Cys166–Gly173, Cys188–Gly195, and Cys202–Gly209. Disordered stretches follow at residues Asp227–Pro246 and Lys354–Ser376. Positions Gly237–Pro246 are enriched in gly residues. Basic and acidic residues predominate over residues Trp367–Ser376.

Belongs to the DnaJ family. As to quaternary structure, homodimer. Zn(2+) is required as a cofactor.

It localises to the cytoplasm. Its function is as follows. Participates actively in the response to hyperosmotic and heat shock by preventing the aggregation of stress-denatured proteins and by disaggregating proteins, also in an autonomous, DnaK-independent fashion. Unfolded proteins bind initially to DnaJ; upon interaction with the DnaJ-bound protein, DnaK hydrolyzes its bound ATP, resulting in the formation of a stable complex. GrpE releases ADP from DnaK; ATP binding to DnaK triggers the release of the substrate protein, thus completing the reaction cycle. Several rounds of ATP-dependent interactions between DnaJ, DnaK and GrpE are required for fully efficient folding. Also involved, together with DnaK and GrpE, in the DNA replication of plasmids through activation of initiation proteins. The protein is Chaperone protein DnaJ of Acidovorax ebreus (strain TPSY) (Diaphorobacter sp. (strain TPSY)).